The sequence spans 386 residues: MSVRLQLGQLNESQARARLRETRRWVIKIGSALLTNDGRGLALDAMGLWVDQLAALRKDGVEVVIVSSGAVAEGMSRLGWRERPKLLDELQAAAAVGQMGLVQAWEAQFKRHGMQTAQILLTHEDLSDRKRYLNARGALCTLIDMGVAPIINENDTVVTDEIRFGDNDTLAALVANLVEADHLIILTDQSGLFDKDPRSNTDACLVGVAKANDTALDSMASGSSGALGRGGMFTKLRASRLASRSGAATVIVGGRIDSVLTRLRNGDELGTLLLPDQERWVARKQWLAGHLKTRGRLVLDDGAVRVLTQQGRSLLPVGVKSVDGGFQRGEMVSCYDLQGNEVARGLVNYDADEAVRIVGVASEKIESILGYINEPELIHRDNLVML.

Lys-28 serves as a coordination point for ATP. Substrate contacts are provided by Ser-68, Asp-155, and Asn-167. 187–188 provides a ligand contact to ATP; it reads TD. The region spanning 294-372 is the PUA domain; the sequence is RGRLVLDDGA…EKIESILGYI (79 aa).

The protein belongs to the glutamate 5-kinase family.

It localises to the cytoplasm. It catalyses the reaction L-glutamate + ATP = L-glutamyl 5-phosphate + ADP. Its pathway is amino-acid biosynthesis; L-proline biosynthesis; L-glutamate 5-semialdehyde from L-glutamate: step 1/2. In terms of biological role, catalyzes the transfer of a phosphate group to glutamate to form L-glutamate 5-phosphate. In Hahella chejuensis (strain KCTC 2396), this protein is Glutamate 5-kinase.